A 302-amino-acid chain; its full sequence is Glycine--tRNA ligase alpha subunit (302 aa).

Belongs to the class-II aminoacyl-tRNA synthetase family. In terms of assembly, tetramer of two alpha and two beta subunits.

It localises to the cytoplasm. It catalyses the reaction tRNA(Gly) + glycine + ATP = glycyl-tRNA(Gly) + AMP + diphosphate. This Haemophilus influenzae (strain PittGG) protein is Glycine--tRNA ligase alpha subunit.